A 533-amino-acid chain; its full sequence is Zinc finger protein 692 (533 aa).

Disordered regions lie at residues 124 to 251 and 290 to 310; these read SLIP…PATL and TESL…TCDE. Positions 149–178 are enriched in basic and acidic residues; the sequence is EARRKQEAEGLECEHRERTQETRLSRRVEP. Acidic residues predominate over residues 190–208; that stretch reads QVVEEEEEEEEEEEEEELL. Position 233 is a phosphoserine (Ser233). The span at 290 to 305 shows a compositional bias: polar residues; that stretch reads TESLDSPGSQAQSAPN. 5 consecutive C2H2-type zinc fingers follow at residues 329 to 354, 360 to 384, 390 to 412, 418 to 440, and 449 to 472; these read MPCD…KYQH, FCCP…VKLH, YICE…RRIH, LQCE…RRKH, and FPCE…SKSH. Ser471 is subject to Phosphoserine. The segment at 478-533 is disordered; that stretch reads VQESPGSLGSSPSISAPEPLQSPEGTSFSTSYDSNPAPSTSISSPGVPAPRNTEKS. The segment covering 481–492 has biased composition (low complexity); the sequence is SPGSLGSSPSIS. Positions 500 to 521 are enriched in polar residues; it reads PEGTSFSTSYDSNPAPSTSISS.

It belongs to the krueppel C2H2-type zinc-finger protein family. Phosphorylation at Ser-471 results in loss of DNA-binding activity.

The protein resides in the nucleus. Its function is as follows. May act as an transcriptional repressor for PCK1 gene expression, in turns may participate in the hepatic gluconeogenesis regulation through the activated AMPK signaling pathway. The sequence is that of Zinc finger protein 692 from Rattus norvegicus (Rat).